The following is a 217-amino-acid chain: Histone H1C (217 aa).

Low complexity-rich tracts occupy residues 1 to 11 and 28 to 45; these read MAETASTETTP and KKAA…PSAS. Disordered regions lie at residues 1–45 and 123–217; these read MAET…PSAS and VAKK…AAKK. Positions 40-113 constitute an H15 domain; it reads SGPSASELIV…GASGSFKLNK (74 aa). 2 stretches are compositionally biased toward basic residues: residues 123-151 and 159-217; these read VAKK…KPKK and SPKK…AAKK.

It belongs to the histone H1/H5 family.

It localises to the nucleus. It is found in the chromosome. Histones H1 are necessary for the condensation of nucleosome chains into higher-order structures. In Xenopus laevis (African clawed frog), this protein is Histone H1C.